A 285-amino-acid polypeptide reads, in one-letter code: Secreted alkaline triacylglycerol lipase (285 aa).

A signal peptide spans 1–20 (MLFNYQSLLVGVSLISQALS). The active-site Nucleophile is the Ser-159. Active-site charge relay system residues include Asp-215 and His-268.

Belongs to the AB hydrolase superfamily. FaeA family.

The protein localises to the secreted. The enzyme catalyses a triacylglycerol + H2O = a diacylglycerol + a fatty acid + H(+). Functionally, secreted alkaline lipase that hydrolyzes acylglycerol lipids such as triacylglycerols and consequently releases free fatty acid. Is able to hydrolyze tributyrin (1,2,3-tributyryl-glycerin). This Penicillium cyclopium protein is Secreted alkaline triacylglycerol lipase.